The following is a 1829-amino-acid chain: MNEGEVVLTPEQIQTLRGYASRGDTYGGWRYLANLGDRYADNAAAIVGKDTNLNGLNLWMKKGVENLWDDTVGKKTRLEKFDRVALQHFSQYVDLINKNNGRLPNTSEIERSYYKAVTYHGVSSSAAIDLVINRSLPDMADGYWALGLGIEAERIHNEQAVNNPNGSERDNRKQLISALDKGFDGSFKEKHFTFLQSVMMDLTKLGVEYTIDGWQKIGGWGNGIINDLYKSVVKREWTGIFEIVNNNIKQGNEAFKNEINSLVHDMKAAGKEFGDDLNTQWNNLTQAAEIIYNDIVDNTSQGIEKGVKAIKELSEKMKNAASDLADGSAEKAKQVVEDLAQAAKEAYENAKSTAEKAAQAAREFFKGLPSFKDLAEKFRDLFPNPEGWIDDGHQCFAPWVKETKKRNGKYHVYDPLALDLDGDGIETVATKGFSGSLFDHNRDGIRTATGWVAADDGLLVRDLNGNGIIDNGAELFGDNTKLADGSFAKHGYAALAELDSNGDNIINAADAAFQTLRVWQDLNQDGISQANELRTLEELGIQSLDLAYKDVNKNLGNGNTLAQQGSYTKTDGTTAKMGDLLLAADNLHSRFKDKVELTAEQAKAANLAGIGRLRDLREAAALSGDLANMLKAYSAAETKEAQLALLDNLIHKWAETDSNWGKKSPMRLSTDWTQTANEGIALTPSQVAQLKKNALVSLSDKAKAAIDAARDRIAVLDAYTGQDSSTLYYMSEEDALNIVKVTNDTYDHLAKNIYQNLLFQTRLQPYLNQISFKMENDTFTLDFSGLVQAFNHVKETNPQKAFVDLAEMLAYGELRSWYEGRRLMADYVEEAKKAGKFEDYQKVLGQETVALLAKTSGTQADDILQNVGFGHNKNVSLYGNDGNDTLIGGAGNDYLEGGSGSDTYVFGKGFGQDTVYNYDYATGRKDIIRFTDGITADMLTFTREGNHLLIKAKDDSGQVTVQSYFQNDGSGAYRIDEIHFDNGKVLDVATVKELVQQSTDGSDRLYAYQSGNTLNGGLGDDYLYGADGDDLLNGDAGNDSIYSGNGNDTLNGGEGNDALYGYNGNDALNGGEGNDHLNGEDGNDTLIGGAGNDYLEGGSGSDTYVFGKGFGQDTVYNYDYATGRKDIIRFTDGITADMLTFTREGNHLLIKAKDGSGQVTVQSYFQNDGSGAYRIDEIHFDNGKVLDVATVKELVQQSTDGSDRLYAYQSGNTLNGGLGDDYLYGADGDDLLNGDAGNDSIYSGNGNDTLDGGEGNDALYGYNGNDALNGGEGNDHLNGEDGNDTLIGGAGNDYLEGGSGSDTYVFGKGFGQDTVYNYDYATGRKDIIRFTDGITADMLTFTREGNHLLIKAKDDSGQVTVQSYFQNDGSGAYRIDEIHFDNGKVLDVATVKELVQQSTDGSDRLYAYQSGSTLNGGLGDDYLYGADGDDLLNGDAGNDSIYSGNGNDTLDGGEGNDALYGYNGNDALNGGEGNDHLNGEDGNDTLIGGAGNDYLEGGSGSDTYVFGKGFGQDTVYNYDYATGRKDIIRFTDGITADMLTFTREGNHLLIKAKDGSGQVTVQSYFQNDGSGAYRIDEIHFDNGKVLDVATVKKLVQQSTDGSDRLYAYQSGNTLNGGLGDDYLYGADGDDLLNGDAGNDSIYSGNGNDTLNGGEGNDALYGYNGNDVLNGGEGNDHLNGEDGNDTLIGGAGNDYLEGGSGSDTYVFGKGFGQDTVYNYHVDKNSDTMHFKGFKAADVHFIRSGSDLVLSASEQDNVRISGFFYGENHRVDTFVFDDAAISNPDFAKYINAGNNLVQSMSVFGSNTAATGGNVDANTQSVQQPLLVTPSA.

Hemolysin-type calcium-binding repeat units follow at residues 869 to 886, 887 to 904, 1015 to 1032, 1033 to 1050, 1051 to 1068, 1069 to 1086, 1087 to 1104, 1215 to 1232, 1233 to 1250, 1251 to 1268, 1269 to 1286, 1287 to 1304, 1415 to 1432, 1433 to 1450, 1451 to 1468, 1469 to 1486, 1487 to 1504, 1615 to 1632, 1633 to 1650, 1651 to 1668, 1669 to 1686, and 1687 to 1704; these read FGHNKNVSLYGNDGNDTL, IGGAGNDYLEGGSGSDTY, NGGLGDDYLYGADGDDLL, NGDAGNDSIYSGNGNDTL, NGGEGNDALYGYNGNDAL, NGGEGNDHLNGEDGNDTL, DGGEGNDALYGYNGNDAL, and NGGEGNDALYGYNGNDVL.

The protein belongs to the RTX prokaryotic toxin (TC 1.C.11) family.

It is found in the cell outer membrane. The protein localises to the secreted. Functionally, may participate in the pathogenesis of meningococcal disease. The polypeptide is Iron-regulated protein FrpC (frpC) (Neisseria meningitidis serogroup C).